Reading from the N-terminus, the 317-residue chain is Ret finger protein-like 3 (317 aa).

An RING-type zinc finger spans residues 40-82 (CPVCSDYLEKPMSLECGCTVCLKCINSLQKEPHGEDLLCCCCS). The 195-residue stretch at 107–301 (EPKLKKILQM…DQGVLSICPL (195 aa)) folds into the B30.2/SPRY domain.

As to expression, expressed during neurogenesis in differentiating human embryonic stem cells and in the developing human neocortex.

The protein localises to the cytoplasm. It is found in the nucleus. In terms of biological role, (Microbial infection) Stimulates the activity of Human Immunodeficiency Virus 1/HIV-1 pre-integration complex. The polypeptide is Ret finger protein-like 3 (RFPL3) (Homo sapiens (Human)).